The sequence spans 369 residues: Methylthioribose-1-phosphate isomerase (369 aa).

Substrate is bound by residues 54 to 56 (RGA), arginine 95, and glutamine 208. Catalysis depends on aspartate 249, which acts as the Proton donor. Residue 259-260 (NK) coordinates substrate.

The protein belongs to the eIF-2B alpha/beta/delta subunits family. MtnA subfamily.

The enzyme catalyses 5-(methylsulfanyl)-alpha-D-ribose 1-phosphate = 5-(methylsulfanyl)-D-ribulose 1-phosphate. It functions in the pathway amino-acid biosynthesis; L-methionine biosynthesis via salvage pathway; L-methionine from S-methyl-5-thio-alpha-D-ribose 1-phosphate: step 1/6. Functionally, catalyzes the interconversion of methylthioribose-1-phosphate (MTR-1-P) into methylthioribulose-1-phosphate (MTRu-1-P). The protein is Methylthioribose-1-phosphate isomerase of Desulfatibacillum aliphaticivorans.